Here is a 138-residue protein sequence, read N- to C-terminus: ATP synthase epsilon chain (138 aa).

This sequence belongs to the ATPase epsilon chain family. As to quaternary structure, F-type ATPases have 2 components, CF(1) - the catalytic core - and CF(0) - the membrane proton channel. CF(1) has five subunits: alpha(3), beta(3), gamma(1), delta(1), epsilon(1). CF(0) has three main subunits: a, b and c.

It localises to the cell inner membrane. Its function is as follows. Produces ATP from ADP in the presence of a proton gradient across the membrane. The chain is ATP synthase epsilon chain from Acidovorax ebreus (strain TPSY) (Diaphorobacter sp. (strain TPSY)).